Here is a 953-residue protein sequence, read N- to C-terminus: Translation initiation factor IF-2 (953 aa).

Disordered stretches follow at residues 48–212 (SSFS…KIDF) and 279–367 (TKLK…FHEL). 3 stretches are compositionally biased toward basic and acidic residues: residues 80–89 (TGSEHVEKTQ), 98–111 (FKAEREARAKEQAA), and 140–188 (QGDK…ENHK). 2 stretches are compositionally biased toward polar residues: residues 191-207 (RFTNQKKQGRQEPQSKS) and 282-291 (KSSNISAKST). The span at 300-317 (ARPEKNRELTHHSQEGQK) shows a compositional bias: basic and acidic residues. The segment covering 322–338 (SWNSQNQVRNQKNSNWN) has biased composition (low complexity). Residues 339–348 (KNKKTKKGKN) are compositionally biased toward basic residues. Positions 454–623 (ERAPVVTIMG…LLVAEVEELK (170 aa)) constitute a tr-type G domain. The interval 463-470 (GHVDHGKT) is G1. 463–470 (GHVDHGKT) is a GTP binding site. Residues 488–492 (GITQH) are G2. A G3 region spans residues 509-512 (DTPG). GTP is bound by residues 509-513 (DTPGH) and 563-566 (NKID). Residues 563–566 (NKID) are G4. The interval 599-601 (SAK) is G5.

The protein belongs to the TRAFAC class translation factor GTPase superfamily. Classic translation factor GTPase family. IF-2 subfamily.

It localises to the cytoplasm. Its function is as follows. One of the essential components for the initiation of protein synthesis. Protects formylmethionyl-tRNA from spontaneous hydrolysis and promotes its binding to the 30S ribosomal subunits. Also involved in the hydrolysis of GTP during the formation of the 70S ribosomal complex. This Streptococcus pyogenes serotype M3 (strain ATCC BAA-595 / MGAS315) protein is Translation initiation factor IF-2.